Reading from the N-terminus, the 102-residue chain is Small ribosomal subunit protein uS10 (102 aa).

It belongs to the universal ribosomal protein uS10 family. In terms of assembly, part of the 30S ribosomal subunit.

Functionally, involved in the binding of tRNA to the ribosomes. In Pelotomaculum thermopropionicum (strain DSM 13744 / JCM 10971 / SI), this protein is Small ribosomal subunit protein uS10.